Consider the following 37-residue polypeptide: Large ribosomal subunit protein bL36 (37 aa).

It belongs to the bacterial ribosomal protein bL36 family.

This Nocardia farcinica (strain IFM 10152) protein is Large ribosomal subunit protein bL36.